Reading from the N-terminus, the 145-residue chain is Large-conductance mechanosensitive channel (145 aa).

The next 3 membrane-spanning stretches (helical) occupy residues 14–34, 38–58, and 81–101; these read VMDL…VKSL, LIMP…YFLP, and GSFL…FLMV.

It belongs to the MscL family. As to quaternary structure, homopentamer.

It localises to the cell inner membrane. Its function is as follows. Channel that opens in response to stretch forces in the membrane lipid bilayer. May participate in the regulation of osmotic pressure changes within the cell. In Rhizobium etli (strain CIAT 652), this protein is Large-conductance mechanosensitive channel.